A 439-amino-acid chain; its full sequence is Probable guanine deaminase (439 aa).

Zn(2+) contacts are provided by His76 and His78. Residues His78–Gln81, Arg203–Phe204, His231–Glu234, and Asp321 each bind substrate. Zn(2+) is bound by residues His231 and Asp321.

This sequence belongs to the metallo-dependent hydrolases superfamily. ATZ/TRZ family. It depends on Zn(2+) as a cofactor.

It carries out the reaction guanine + H2O + H(+) = xanthine + NH4(+). The protein operates within purine metabolism; guanine degradation; xanthine from guanine: step 1/1. Functionally, catalyzes the hydrolytic deamination of guanine, producing xanthine and ammonia. This Deinococcus radiodurans (strain ATCC 13939 / DSM 20539 / JCM 16871 / CCUG 27074 / LMG 4051 / NBRC 15346 / NCIMB 9279 / VKM B-1422 / R1) protein is Probable guanine deaminase (guaD).